The following is a 350-amino-acid chain: tRNA dimethylallyltransferase (350 aa).

The tract at residues Met1 to Pro20 is disordered. Pro residues predominate over residues Pro10–Pro20. Gly27–Thr34 contributes to the ATP binding site. Substrate is bound at residue Thr29–Thr34. Interaction with substrate tRNA regions lie at residues Asp52–Leu55, Gln176–Arg180, and Arg273–Arg278.

Belongs to the IPP transferase family. As to quaternary structure, monomer. Mg(2+) serves as cofactor.

It carries out the reaction adenosine(37) in tRNA + dimethylallyl diphosphate = N(6)-dimethylallyladenosine(37) in tRNA + diphosphate. Functionally, catalyzes the transfer of a dimethylallyl group onto the adenine at position 37 in tRNAs that read codons beginning with uridine, leading to the formation of N6-(dimethylallyl)adenosine (i(6)A). The sequence is that of tRNA dimethylallyltransferase from Albidiferax ferrireducens (strain ATCC BAA-621 / DSM 15236 / T118) (Rhodoferax ferrireducens).